The chain runs to 673 residues: Annexin A6 (673 aa).

Position 2 is an N-acetylalanine (A2). At S13 the chain carries Phosphoserine. 8 Annexin repeats span residues 20–91, 92–163, 175–247, 251–322, 363–434, 435–506, 521–595, and 599–670; these read FNPS…GLMR, PPAY…VLLQ, DLVQ…AVVK, STAE…KLCG, FNPD…GLMM, PPAH…SLAT, EDAQ…AIVQ, and NKPL…AICG. Y30 carries the phosphotyrosine modification. Residues K63, K68, K75, and K81 each carry the N6-acetyllysine modification. The residue at position 201 (Y201) is a Phosphotyrosine. An N6-acetyllysine mark is found at K306, K370, and K418. S422 bears the Phosphoserine mark. K483 carries the post-translational modification N6-acetyllysine. A Phosphoserine modification is found at S537. K620 is modified (N6-acetyllysine).

It belongs to the annexin family. Phosphorylated in response to growth factor stimulation.

It is found in the cytoplasm. The protein resides in the melanosome. Functionally, may associate with CD21. May regulate the release of Ca(2+) from intracellular stores. In Bos taurus (Bovine), this protein is Annexin A6 (ANXA6).